Here is a 295-residue protein sequence, read N- to C-terminus: Foldase protein PrsA (295 aa).

The first 19 residues, Met-1–Ala-19, serve as a signal peptide directing secretion. Cys-20 is lipidated: N-palmitoyl cysteine. The S-diacylglycerol cysteine moiety is linked to residue Cys-20. The 94-residue stretch at Glu-136–Asn-229 folds into the PpiC domain.

This sequence belongs to the PrsA family.

It is found in the cell membrane. The catalysed reaction is [protein]-peptidylproline (omega=180) = [protein]-peptidylproline (omega=0). Its function is as follows. Plays a major role in protein secretion by helping the post-translocational extracellular folding of several secreted proteins. The protein is Foldase protein PrsA of Pediococcus pentosaceus (strain ATCC 25745 / CCUG 21536 / LMG 10740 / 183-1w).